The following is a 449-amino-acid chain: Nucleoprotein (449 aa).

Residues Met1–Ser55 are disordered. Residues Ser9 to Gly22 show a composition bias toward low complexity. 2 stretches are compositionally biased toward polar residues: residues Gln29–Thr38 and Ser45–Ser55. The tract at residues Gln52 to Ser194 is RNA-binding. In terms of domain architecture, CoV N NTD spans Pro61–Gly190. Arg106, Arg122, and Arg164 together coordinate RNA. Disordered regions lie at residues Pro158–Asp231, Ile266–Gly297, and Met387–Ile449. Ser167 is modified (phosphoserine; by host). Thr174 is modified (phosphothreonine; by host). Ser191 is subject to Phosphoserine; by host. 2 stretches are compositionally biased toward polar residues: residues Ser194–Ala204 and Gly212–Gly227. A CoV N CTD domain is found at Ala259–Glu384. A compositionally biased stretch (basic residues) spans Ile266–Pro276. The tract at residues Ile266–Asp385 is dimerization. Position 391 is a phosphoserine; by host (Ser391). The segment covering Gln400–Ile410 has biased composition (polar residues). A compositionally biased stretch (basic and acidic residues) spans Lys423–Glu440. The residue at position 424 (Ser424) is a Phosphoserine; by host. Phosphothreonine; by host is present on Thr428.

It belongs to the betacoronavirus nucleocapsid protein family. Homooligomer. Both monomeric and oligomeric forms interact with RNA. Interacts with protein M. Interacts with NSP3; this interaction serves to tether the genome to the newly translated replicase-transcriptase complex at a very early stage of infection. ADP-ribosylated. The ADP-ribosylation is retained in the virion during infection. Post-translationally, phosphorylated on serine and threonine residues.

It localises to the virion. The protein localises to the host endoplasmic reticulum-Golgi intermediate compartment. Its subcellular location is the host Golgi apparatus. Its function is as follows. Packages the positive strand viral genome RNA into a helical ribonucleocapsid (RNP) and plays a fundamental role during virion assembly through its interactions with the viral genome and membrane protein M. Plays an important role in enhancing the efficiency of subgenomic viral RNA transcription as well as viral replication. This is Nucleoprotein from Sus scrofa (Pig).